Reading from the N-terminus, the 835-residue chain is Phosphatidylinositol 4-kinase beta (835 aa).

Disordered stretches follow at residues 1 to 61 (MGDT…PLDV), 99 to 139 (SSAS…VRRR), and 267 to 341 (PSSQ…PVRL). A compositionally biased stretch (low complexity) spans 19 to 59 (SPSTSTTSSLSLPSSPSSGPHPLTSSSPSTSEGLPTSSPPL). A PIK helical domain is found at 59 to 262 (LDVISEGLGE…GTKLRKLILS (204 aa)). Basic and acidic residues-rich tracts occupy residues 125 to 134 (ISEEEVEPIK) and 267 to 276 (PSSQRIRREV). Positions 277-288 (PQPPPPYPPPLH) are enriched in pro residues. Residues 311 to 332 (DATVSISLSSNLKRTASNPKVE) are compositionally biased toward polar residues. The PI3K/PI4K catalytic domain maps to 554 to 820 (EPWQEKVRRI…MVDGSMRSIT (267 aa)). The segment at 560 to 566 (VRRIREG) is G-loop. The interval 687-695 (QVKDRHNGN) is catalytic loop. The tract at residues 706 to 730 (HIDFGFILSSSPRNLGFETSAFKLT) is activation loop.

This sequence belongs to the PI3/PI4-kinase family. Type III PI4K subfamily. Requires Mg(2+) as cofactor. Mn(2+) serves as cofactor. In terms of tissue distribution, expressed in the inner ear otic vesicles.

It localises to the endomembrane system. It is found in the mitochondrion outer membrane. The protein localises to the rough endoplasmic reticulum membrane. It carries out the reaction a 1,2-diacyl-sn-glycero-3-phospho-(1D-myo-inositol) + ATP = a 1,2-diacyl-sn-glycero-3-phospho-(1D-myo-inositol 4-phosphate) + ADP + H(+). Functionally, phosphorylates phosphatidylinositol (PI) in the first committed step in the production of the second messenger inositol-1,4,5,-trisphosphate (PIP). May play an important role the in inner ear development. The chain is Phosphatidylinositol 4-kinase beta (pi4kb) from Danio rerio (Zebrafish).